We begin with the raw amino-acid sequence, 508 residues long: Photosystem II CP47 reaction center protein (508 aa).

The next 6 helical transmembrane spans lie at 21 to 36 (SVHI…WAGS), 101 to 115 (IVFS…IWHW), 140 to 156 (GIHL…FGAF), 203 to 218 (IAAG…FHLS), 237 to 252 (VLSS…AFVV), and 457 to 472 (SFAL…HGAR).

This sequence belongs to the PsbB/PsbC family. PsbB subfamily. PSII is composed of 1 copy each of membrane proteins PsbA, PsbB, PsbC, PsbD, PsbE, PsbF, PsbH, PsbI, PsbJ, PsbK, PsbL, PsbM, PsbT, PsbX, PsbY, PsbZ, Psb30/Ycf12, at least 3 peripheral proteins of the oxygen-evolving complex and a large number of cofactors. It forms dimeric complexes. The cofactor is Binds multiple chlorophylls. PSII binds additional chlorophylls, carotenoids and specific lipids..

It localises to the plastid. Its subcellular location is the chloroplast thylakoid membrane. Functionally, one of the components of the core complex of photosystem II (PSII). It binds chlorophyll and helps catalyze the primary light-induced photochemical processes of PSII. PSII is a light-driven water:plastoquinone oxidoreductase, using light energy to abstract electrons from H(2)O, generating O(2) and a proton gradient subsequently used for ATP formation. In Aethionema grandiflorum (Persian stone-cress), this protein is Photosystem II CP47 reaction center protein.